We begin with the raw amino-acid sequence, 109 residues long: MSKRPAFPGMGGMNMQQMMKQAKKLQEQMAQEQENITTQEFTGKAADDMVVATFTGDRTLKSLFIKPEAIDPDDPDMLEDLVIDAVNKGLKQIDQATQQSLGKYTKGLM.

The interval 18–40 (MMKQAKKLQEQMAQEQENITTQE) is disordered.

It belongs to the YbaB/EbfC family. As to quaternary structure, homodimer.

It localises to the cytoplasm. The protein resides in the nucleoid. In terms of biological role, binds to DNA and alters its conformation. May be involved in regulation of gene expression, nucleoid organization and DNA protection. This chain is Nucleoid-associated protein Ldb1634, found in Lactobacillus delbrueckii subsp. bulgaricus (strain ATCC 11842 / DSM 20081 / BCRC 10696 / JCM 1002 / NBRC 13953 / NCIMB 11778 / NCTC 12712 / WDCM 00102 / Lb 14).